The sequence spans 64 residues: Translational regulator CsrA (64 aa).

This sequence belongs to the CsrA/RsmA family. As to quaternary structure, homodimer; the beta-strands of each monomer intercalate to form a hydrophobic core, while the alpha-helices form wings that extend away from the core.

The protein resides in the cytoplasm. A key translational regulator that binds mRNA to regulate translation initiation and/or mRNA stability. Mediates global changes in gene expression, shifting from rapid growth to stress survival by linking envelope stress, the stringent response and the catabolite repression systems. Usually binds in the 5'-UTR; binding at or near the Shine-Dalgarno sequence prevents ribosome-binding, repressing translation, binding elsewhere in the 5'-UTR can activate translation and/or stabilize the mRNA. Its function is antagonized by small RNA(s). In Thioalkalivibrio sulfidiphilus (strain HL-EbGR7), this protein is Translational regulator CsrA.